The following is a 79-amino-acid chain: Small ribosomal subunit protein eS17 (79 aa).

Belongs to the eukaryotic ribosomal protein eS17 family.

In Saccharolobus solfataricus (strain ATCC 35092 / DSM 1617 / JCM 11322 / P2) (Sulfolobus solfataricus), this protein is Small ribosomal subunit protein eS17.